The following is a 231-amino-acid chain: MKQIVADSAIEEVEDGMILGLGSGSTAALMIKSLAEKIRSGKLKNIKGVPTSFQSEVLALELNIPLIDLASVPYIDLAIDGADEVDPDFQLIKGGGACHVREKLVASKANKLLIVIDESKLVQNLNQVFPLPVEVMPSAWKQVKDIISEMSGVSNLRMATKKAGPVVTDQGNLILDVLFDAGIRDPKDLEMRINNIPGVLENGLFVDLADKVLVGKIEDDVPVLFSPSRRS.

Substrate is bound by residues 23–26, 80–83, and 93–96; these read SGST, DGAD, and KGGG. E102 acts as the Proton acceptor in catalysis. Residue K120 coordinates substrate.

Belongs to the ribose 5-phosphate isomerase family. As to quaternary structure, homodimer.

The catalysed reaction is aldehydo-D-ribose 5-phosphate = D-ribulose 5-phosphate. It functions in the pathway carbohydrate degradation; pentose phosphate pathway; D-ribose 5-phosphate from D-ribulose 5-phosphate (non-oxidative stage): step 1/1. Functionally, catalyzes the reversible conversion of ribose-5-phosphate to ribulose 5-phosphate. In Prochlorococcus marinus subsp. pastoris (strain CCMP1986 / NIES-2087 / MED4), this protein is Ribose-5-phosphate isomerase A.